Reading from the N-terminus, the 260-residue chain is Acetyl-coenzyme A carboxylase carboxyl transferase subunit alpha (260 aa).

The CoA carboxyltransferase C-terminal domain occupies 1–235 (MSAYDKVMAA…SNKILHSINK (235 aa)).

Belongs to the AccA family. As to quaternary structure, acetyl-CoA carboxylase is a heterohexamer composed of biotin carboxyl carrier protein (AccB), biotin carboxylase (AccC) and two subunits each of ACCase subunit alpha (AccA) and ACCase subunit beta (AccD).

The protein localises to the cytoplasm. It catalyses the reaction N(6)-carboxybiotinyl-L-lysyl-[protein] + acetyl-CoA = N(6)-biotinyl-L-lysyl-[protein] + malonyl-CoA. Its pathway is lipid metabolism; malonyl-CoA biosynthesis; malonyl-CoA from acetyl-CoA: step 1/1. In terms of biological role, component of the acetyl coenzyme A carboxylase (ACC) complex. First, biotin carboxylase catalyzes the carboxylation of biotin on its carrier protein (BCCP) and then the CO(2) group is transferred by the carboxyltransferase to acetyl-CoA to form malonyl-CoA. This is Acetyl-coenzyme A carboxylase carboxyl transferase subunit alpha from Ruminiclostridium cellulolyticum (strain ATCC 35319 / DSM 5812 / JCM 6584 / H10) (Clostridium cellulolyticum).